A 164-amino-acid chain; its full sequence is Biotin carboxyl carrier protein of acetyl-CoA carboxylase (164 aa).

Positions 86-162 constitute a Biotinyl-binding domain; that stretch reads GDFIVSPLVG…QFGSKLFRIV (77 aa). Position 128 is an N6-biotinyllysine (Lys128).

Homodimer.

It participates in lipid metabolism; fatty acid biosynthesis. This protein is a component of the acetyl coenzyme A carboxylase complex; first, biotin carboxylase catalyzes the carboxylation of the carrier protein and then the transcarboxylase transfers the carboxyl group to form malonyl-CoA. In Chlamydia trachomatis serovar D (strain ATCC VR-885 / DSM 19411 / UW-3/Cx), this protein is Biotin carboxyl carrier protein of acetyl-CoA carboxylase (accB).